The chain runs to 210 residues: Large ribosomal subunit protein uL4 (210 aa).

The segment at 44–77 (ARQGNASSKTRSEVRGGGRKPWRQKGTGRARAGS) is disordered. Residues 60 to 71 (GGRKPWRQKGTG) are compositionally biased toward basic residues.

Belongs to the universal ribosomal protein uL4 family. In terms of assembly, part of the 50S ribosomal subunit.

Functionally, one of the primary rRNA binding proteins, this protein initially binds near the 5'-end of the 23S rRNA. It is important during the early stages of 50S assembly. It makes multiple contacts with different domains of the 23S rRNA in the assembled 50S subunit and ribosome. Forms part of the polypeptide exit tunnel. The sequence is that of Large ribosomal subunit protein uL4 from Microcystis aeruginosa (strain NIES-843 / IAM M-2473).